Here is a 430-residue protein sequence, read N- to C-terminus: Glutamate-1-semialdehyde 2,1-aminomutase (430 aa).

Residue Lys-265 is modified to N6-(pyridoxal phosphate)lysine.

This sequence belongs to the class-III pyridoxal-phosphate-dependent aminotransferase family. HemL subfamily. As to quaternary structure, homodimer. Pyridoxal 5'-phosphate is required as a cofactor.

It localises to the cytoplasm. It catalyses the reaction (S)-4-amino-5-oxopentanoate = 5-aminolevulinate. It functions in the pathway porphyrin-containing compound metabolism; protoporphyrin-IX biosynthesis; 5-aminolevulinate from L-glutamyl-tRNA(Glu): step 2/2. The protein is Glutamate-1-semialdehyde 2,1-aminomutase of Helicobacter pylori (strain Shi470).